Consider the following 507-residue polypeptide: Histidine ammonia-lyase (507 aa).

Positions 141-143 (ASG) form a cross-link, 5-imidazolinone (Ala-Gly). Ser142 carries the 2,3-didehydroalanine (Ser) modification.

This sequence belongs to the PAL/histidase family. Contains an active site 4-methylidene-imidazol-5-one (MIO), which is formed autocatalytically by cyclization and dehydration of residues Ala-Ser-Gly.

It localises to the cytoplasm. It carries out the reaction L-histidine = trans-urocanate + NH4(+). It participates in amino-acid degradation; L-histidine degradation into L-glutamate; N-formimidoyl-L-glutamate from L-histidine: step 1/3. The chain is Histidine ammonia-lyase from Burkholderia cenocepacia (strain ATCC BAA-245 / DSM 16553 / LMG 16656 / NCTC 13227 / J2315 / CF5610) (Burkholderia cepacia (strain J2315)).